Consider the following 380-residue polypeptide: Magnesium-protoporphyrin IX monomethyl ester [oxidative] cyclase 1 (380 aa).

This sequence belongs to the AcsF family. Fe cation is required as a cofactor.

It catalyses the reaction Mg-protoporphyrin IX 13-monomethyl ester + 3 NADPH + 3 O2 + 2 H(+) = 3,8-divinyl protochlorophyllide a + 3 NADP(+) + 5 H2O. The protein operates within porphyrin-containing compound metabolism; chlorophyll biosynthesis (light-independent). In terms of biological role, catalyzes the formation of the isocyclic ring in chlorophyll biosynthesis. Mediates the cyclase reaction, which results in the formation of divinylprotochlorophyllide (Pchlide) characteristic of all chlorophylls from magnesium-protoporphyrin IX 13-monomethyl ester (MgPMME). In Thermosynechococcus vestitus (strain NIES-2133 / IAM M-273 / BP-1), this protein is Magnesium-protoporphyrin IX monomethyl ester [oxidative] cyclase 1.